The chain runs to 754 residues: 1,4-alpha-glucan branching enzyme GlgB (754 aa).

The active-site Nucleophile is the aspartate 431. Residue glutamate 484 is the Proton donor of the active site.

This sequence belongs to the glycosyl hydrolase 13 family. GlgB subfamily. Monomer.

It catalyses the reaction Transfers a segment of a (1-&gt;4)-alpha-D-glucan chain to a primary hydroxy group in a similar glucan chain.. Its pathway is glycan biosynthesis; glycogen biosynthesis. Catalyzes the formation of the alpha-1,6-glucosidic linkages in glycogen by scission of a 1,4-alpha-linked oligosaccharide from growing alpha-1,4-glucan chains and the subsequent attachment of the oligosaccharide to the alpha-1,6 position. This chain is 1,4-alpha-glucan branching enzyme GlgB, found in Prochlorococcus marinus (strain MIT 9215).